We begin with the raw amino-acid sequence, 1562 residues long: Phospholipid-transporting ATPase dnf1 (1562 aa).

Disordered stretches follow at residues 1–38, 55–94, 115–134, and 146–166; these read MKSS…ADDG, LPLG…SDSR, TPST…KKAH, and PLDD…NGRP. The Extracellular portion of the chain corresponds to 1–275; it reads MKSSGIAGDS…IAIMQMIPGW (275 aa). The segment covering 12 to 21 has biased composition (polar residues); it reads GFETNFLNET. The span at 60-69 shows a compositional bias: acidic residues; that stretch reads DENELDEIDI. The segment covering 71 to 86 has biased composition (basic and acidic residues); that stretch reads GDSKKLDSVEVDESHD. The helical transmembrane segment at 276 to 296 threads the bilayer; the sequence is STTGTYTTIIPLLIFISIAIL. At 297–574 the chain is on the cytoplasmic side; it reads REGFDNYRRY…APSMQKVTNR (278 aa). A disordered region spans residues 347–406; that stretch reads SQESASRSTIRSTDEREPERTSEDPPQLPPSPSSPSSPALSVKPNIDPQPPLYNSTLTTT. Residues 358 to 369 are compositionally biased toward basic and acidic residues; the sequence is STDEREPERTSE. Residues 372–381 show a composition bias toward pro residues; it reads PQLPPSPSSP. The chain crosses the membrane as a helical span at residues 575-595; sequence IVIFIFALVVSMAIYCTAAYF. At 596 to 614 the chain is on the extracellular side; the sequence is VWQKKVERKLWYLTNSKLS. A helical membrane pass occupies residues 615–635; the sequence is FVPILVSFIILYNTMVPISLY. Residues 636 to 1309 are Cytoplasmic-facing; that stretch reads VSMEIIRVFQ…YILGTFYKEQ (674 aa). The active-site 4-aspartylphosphate intermediate is aspartate 684. The ATP site is built by aspartate 684, lysine 685, threonine 686, glutamate 794, phenylalanine 843, serine 845, lysine 848, and lysine 866. Aspartate 684 is a binding site for Mg(2+). A Mg(2+)-binding site is contributed by threonine 686. Serine 954 carries the phosphoserine modification. Residues arginine 1022, threonine 1023, threonine 1102, glycine 1103, aspartate 1104, 1181–1188, arginine 1216, and lysine 1222 each bind ATP; that span reads VIVIDGST. Position 1243 (aspartate 1243) interacts with Mg(2+). Positions 1246 and 1247 each coordinate ATP. A helical transmembrane segment spans residues 1310–1330; the sequence is FFFLMQAIMQPFVGYTGQSLY. Residues 1331–1332 lie on the Extracellular side of the membrane; it reads ES. Residues 1333–1353 form a helical membrane-spanning segment; it reads WGLTCFNTLFSSLCVIGLGIF. The Cytoplasmic segment spans residues 1354 to 1381; sequence EKDLSASTVIAVPELYQKGINNEAFNWR. A helical membrane pass occupies residues 1382–1402; that stretch reads VYFGWCSIAFIQAFLVFYVTY. Residues 1403–1414 are Extracellular-facing; it reads SLFGMKELNDNN. A helical membrane pass occupies residues 1415-1435; that stretch reads IFAYGQLIFTAAIFIMNFKLV. Over 1436 to 1443 the chain is Cytoplasmic; sequence FIEMQYIN. A helical membrane pass occupies residues 1444-1464; sequence IISIIVLVLTSLAWFLFNIFI. At 1465–1490 the chain is on the extracellular side; it reads SEHYPDKNLYLARSQFLHHFGKNPSW. A helical transmembrane segment spans residues 1491-1511; it reads WLTMLFVMVCALTIDIVAQML. The Cytoplasmic portion of the chain corresponds to 1512-1562; the sequence is RRTLRPTDTDIFVEMENDAFVRSRFEQESGEFLQANAPSVDEIEQYLKSRD.

Belongs to the cation transport ATPase (P-type) (TC 3.A.3) family. Type IV subfamily. Mg(2+) is required as a cofactor.

The protein localises to the golgi apparatus. The protein resides in the trans-Golgi network membrane. Its subcellular location is the endosome membrane. It carries out the reaction ATP + H2O + phospholipidSide 1 = ADP + phosphate + phospholipidSide 2.. The catalysed reaction is a 1,2-diacyl-sn-glycero-3-phosphocholine(out) + ATP + H2O = a 1,2-diacyl-sn-glycero-3-phosphocholine(in) + ADP + phosphate + H(+). It catalyses the reaction a 1,2-diacyl-sn-glycero-3-phosphoethanolamine(out) + ATP + H2O = a 1,2-diacyl-sn-glycero-3-phosphoethanolamine(in) + ADP + phosphate + H(+). Catalytic component of a P4-ATPase flippase complex which catalyzes the hydrolysis of ATP coupled to the transport of phosphatidylcholine and small amounts of phosphatidylethanolamine from the lumen to the cytosolic leaflet of the trans-Golgi network and ensures the maintenance of asymmetric distribution of phospholipids. May be involved in transport from early endosomes to the trans-Golgi network (TGN). In Schizosaccharomyces pombe (strain 972 / ATCC 24843) (Fission yeast), this protein is Phospholipid-transporting ATPase dnf1.